The following is a 158-amino-acid chain: Major latex protein 22 (158 aa).

It belongs to the MLP family. As to expression, laticifer.

The protein resides in the vacuole. It localises to the cytoplasmic vesicle. In terms of biological role, not known; MLPs constitute up to 50% of the soluble latex protein. This is Major latex protein 22 (MLP22) from Papaver somniferum (Opium poppy).